Consider the following 377-residue polypeptide: Flagellin C (377 aa).

2 coiled-coil regions span residues 103–129 (SNSK…IAET) and 301–340 (VDSH…KDTD).

This sequence belongs to the bacterial flagellin family. Heteromer of multiple flagellin subunits including FlaA, FlaB, FlaC, FlaD and possibly FlaE.

It is found in the secreted. The protein localises to the bacterial flagellum. Functionally, flagellin is the subunit protein which polymerizes to form the filaments of bacterial flagella. FlaC is not essential for flagellar synthesis and motility. The chain is Flagellin C (flaC) from Vibrio anguillarum (Listonella anguillarum).